The sequence spans 345 residues: S-adenosylmethionine:tRNA ribosyltransferase-isomerase (345 aa).

This sequence belongs to the QueA family. In terms of assembly, monomer.

The protein localises to the cytoplasm. The catalysed reaction is 7-aminomethyl-7-carbaguanosine(34) in tRNA + S-adenosyl-L-methionine = epoxyqueuosine(34) in tRNA + adenine + L-methionine + 2 H(+). It participates in tRNA modification; tRNA-queuosine biosynthesis. Transfers and isomerizes the ribose moiety from AdoMet to the 7-aminomethyl group of 7-deazaguanine (preQ1-tRNA) to give epoxyqueuosine (oQ-tRNA). The chain is S-adenosylmethionine:tRNA ribosyltransferase-isomerase from Helicobacter pylori (strain Shi470).